A 400-amino-acid chain; its full sequence is DNA primase small subunit PriS (400 aa).

Residues D98, D100, and D306 contribute to the active site.

This sequence belongs to the eukaryotic-type primase small subunit family. Heterodimer of a small subunit (PriS) and a large subunit (PriL). It depends on Mg(2+) as a cofactor. The cofactor is Mn(2+).

In terms of biological role, catalytic subunit of DNA primase, an RNA polymerase that catalyzes the synthesis of short RNA molecules used as primers for DNA polymerase during DNA replication. The small subunit contains the primase catalytic core and has DNA synthesis activity on its own. Binding to the large subunit stabilizes and modulates the activity, increasing the rate of DNA synthesis while decreasing the length of the DNA fragments, and conferring RNA synthesis capability. The DNA polymerase activity may enable DNA primase to also catalyze primer extension after primer synthesis. May also play a role in DNA repair. This is DNA primase small subunit PriS from Methanocella arvoryzae (strain DSM 22066 / NBRC 105507 / MRE50).